The primary structure comprises 925 residues: MAGKARVHELAKELGVTSKEVLARLNEQGEFVKSASSTVEAPVARRLRESFGGGKAAEGAAKAPAKAAAKGDAKTAAKGDVKAPDKALDAALDNAIKAGGNGEAAAPPAQPGGTATTPAAQATPEAPARPGPAAARPSAPAPGQPKPPAPGQPPRPGATPGPRPGPAPKPAARTPRVGNNPFSSAQPVDRPIPRPVPRPGAPRPGAPRPGASPGNMPPRPGGVGGPGRPARPGAPRPGGGRPGGPGGRDGGGGNYRGGGVGASPGGGGGFRGRPGGGGGGRPGQRGGAAGAFGRPGGAPRRGRKSKRQKRQEYDSMQAPVVGGVRLPHGNGETIRLARGASLSDFAEKIDANPASLVQALFNLGEMVTATQSVGDETLELLGSEMNYNVQVVSPEDEDRELLESFDLTYGEDEGTEEDLQTRPPVVTVMGHVDHGKTRLLDTIRKANVREAEAGGITQHIGAYQVTVEHDGVERPITFIDTPGHEAFTAMRARGAKATDIAILVVAADDGVMPQTVEAINHAQAADVPIVVAVNKIDVEGADPQKIRGQLTEYGLVPEEFGGDTMFVDISAKQGTNIDQLLEAVLLTADAALDLRANPDMEAQGVAIEAHLDRGRGPVATVLIQRGTLRVGDSIVAGDAYGRVRRMVDEHGDDVEEALPSRPVQVIGFTSVPGAGDNLLVVDEDRIARQIADKRSARKRNALAARSRKRISLEDLDSALKETSQLNLILKGDNAGTVEALEEALMGIQIDDEVALRVIDRGVGGITETNVNLASASDAVIIGFNVRAEGKATELANREGVEIRYYSVIYQAIDEIEKALRGMLKPIYEENQLGRAEIRAIFRSSKVGIIAGCMITSGVVRRNAKARLLRDNVVVSENLTINSLRREKDDVTEVREGFECGMTLGYSDIKEGDVIESYELVQKERT.

2 disordered regions span residues 52–84 and 98–326; these read GGGKAAEGAAKAPAKAAAKGDAKTAAKGDVKAP and AGGN…GVRL. Positions 57-68 are enriched in low complexity; sequence AEGAAKAPAKAA. Residues 69-84 show a composition bias toward basic and acidic residues; that stretch reads AKGDAKTAAKGDVKAP. Low complexity predominate over residues 98 to 138; the sequence is AGGNGEAAAPPAQPGGTATTPAAQATPEAPARPGPAAARPS. 2 stretches are compositionally biased toward pro residues: residues 139-169 and 193-207; these read APAPGQPKPPAPGQPPRPGATPGPRPGPAPK and PRPVPRPGAPRPGAP. Residues 236-296 show a composition bias toward gly residues; the sequence is RPGGGRPGGP…GAAGAFGRPG (61 aa). Residues 300–309 show a composition bias toward basic residues; the sequence is RRGRKSKRQK. Positions 421–592 constitute a tr-type G domain; the sequence is TRPPVVTVMG…AVLLTADAAL (172 aa). The segment at 430-437 is G1; that stretch reads GHVDHGKT. Residue 430–437 coordinates GTP; the sequence is GHVDHGKT. The G2 stretch occupies residues 455–459; it reads GITQH. Residues 480 to 483 are G3; the sequence is DTPG. Residues 480 to 484 and 534 to 537 contribute to the GTP site; these read DTPGH and NKID. Positions 534 to 537 are G4; that stretch reads NKID. Residues 570–572 are G5; sequence SAK.

This sequence belongs to the TRAFAC class translation factor GTPase superfamily. Classic translation factor GTPase family. IF-2 subfamily.

It localises to the cytoplasm. One of the essential components for the initiation of protein synthesis. Protects formylmethionyl-tRNA from spontaneous hydrolysis and promotes its binding to the 30S ribosomal subunits. Also involved in the hydrolysis of GTP during the formation of the 70S ribosomal complex. The polypeptide is Translation initiation factor IF-2 (Mycolicibacterium paratuberculosis (strain ATCC BAA-968 / K-10) (Mycobacterium paratuberculosis)).